A 361-amino-acid polypeptide reads, in one-letter code: tRNA/tmRNA (uracil-C(5))-methyltransferase (361 aa).

The S-adenosyl-L-methionine site is built by Q185, Y213, N218, E234, and D294. The Nucleophile role is filled by C319. Catalysis depends on E353, which acts as the Proton acceptor.

The protein belongs to the class I-like SAM-binding methyltransferase superfamily. RNA M5U methyltransferase family. TrmA subfamily.

It catalyses the reaction uridine(54) in tRNA + S-adenosyl-L-methionine = 5-methyluridine(54) in tRNA + S-adenosyl-L-homocysteine + H(+). It carries out the reaction uridine(341) in tmRNA + S-adenosyl-L-methionine = 5-methyluridine(341) in tmRNA + S-adenosyl-L-homocysteine + H(+). Functionally, dual-specificity methyltransferase that catalyzes the formation of 5-methyluridine at position 54 (m5U54) in all tRNAs, and that of position 341 (m5U341) in tmRNA (transfer-mRNA). The polypeptide is tRNA/tmRNA (uracil-C(5))-methyltransferase (Pseudomonas putida (strain ATCC 47054 / DSM 6125 / CFBP 8728 / NCIMB 11950 / KT2440)).